The following is a 37-amino-acid chain: Large ribosomal subunit protein bL36 (37 aa).

It belongs to the bacterial ribosomal protein bL36 family.

This Desulfitobacterium hafniense (strain Y51) protein is Large ribosomal subunit protein bL36.